The chain runs to 235 residues: U1 small nuclear ribonucleoprotein C (235 aa).

The Matrin-type zinc finger occupies 4–36 (YYCEYCDIYLTHSSPVGRRQHIHGRKHISAKIE). The disordered stretch occupies residues 131-235 (QAHNNYSYPN…SKEHIESDIS (105 aa)). The segment covering 134–168 (NNYSYPNSINPSNQINYSNNYGSNNFNNSNEFNKN) has biased composition (low complexity). Residues 169–189 (MNEKDNINNNDIHDNKVKTDE) show a composition bias toward basic and acidic residues. Over residues 192 to 203 (PINNDNLNNTRN) the composition is skewed to low complexity. 2 stretches are compositionally biased toward basic and acidic residues: residues 205–217 (SYEE…DHKK) and 225–235 (NSKEHIESDIS).

Belongs to the U1 small nuclear ribonucleoprotein C family. As to quaternary structure, U1 snRNP is composed of the 7 core Sm proteins B/B', D1, D2, D3, E, F and G that assemble in a heptameric protein ring on the Sm site of the small nuclear RNA to form the core snRNP, and at least 3 U1 snRNP-specific proteins U1-70K, U1-A and U1-C. U1-C interacts with U1 snRNA and the 5' splice-site region of the pre-mRNA.

The protein resides in the nucleus. Functionally, component of the spliceosomal U1 snRNP, which is essential for recognition of the pre-mRNA 5' splice-site and the subsequent assembly of the spliceosome. U1-C is directly involved in initial 5' splice-site recognition for both constitutive and regulated alternative splicing. The interaction with the 5' splice-site seems to precede base-pairing between the pre-mRNA and the U1 snRNA. Stimulates commitment or early (E) complex formation by stabilizing the base pairing of the 5' end of the U1 snRNA and the 5' splice-site region. The chain is U1 small nuclear ribonucleoprotein C from Plasmodium falciparum (isolate 3D7).